A 349-amino-acid polypeptide reads, in one-letter code: UDP-3-O-acylglucosamine N-acyltransferase (349 aa).

Histidine 240 functions as the Proton acceptor in the catalytic mechanism.

It belongs to the transferase hexapeptide repeat family. LpxD subfamily. As to quaternary structure, homotrimer.

It carries out the reaction a UDP-3-O-[(3R)-3-hydroxyacyl]-alpha-D-glucosamine + a (3R)-hydroxyacyl-[ACP] = a UDP-2-N,3-O-bis[(3R)-3-hydroxyacyl]-alpha-D-glucosamine + holo-[ACP] + H(+). Its pathway is bacterial outer membrane biogenesis; LPS lipid A biosynthesis. Its function is as follows. Catalyzes the N-acylation of UDP-3-O-acylglucosamine using 3-hydroxyacyl-ACP as the acyl donor. Is involved in the biosynthesis of lipid A, a phosphorylated glycolipid that anchors the lipopolysaccharide to the outer membrane of the cell. The polypeptide is UDP-3-O-acylglucosamine N-acyltransferase (Porphyromonas gingivalis (strain ATCC BAA-308 / W83)).